The sequence spans 81 residues: Photosystem I iron-sulfur center (81 aa).

4Fe-4S ferredoxin-type domains follow at residues 2 to 31 (SHSV…MVPW) and 37 to 68 (GQIA…VRVY). [4Fe-4S] cluster contacts are provided by C11, C14, C17, C21, C48, C51, C54, and C58.

As to quaternary structure, the eukaryotic PSI reaction center is composed of at least 11 subunits. [4Fe-4S] cluster serves as cofactor.

It is found in the plastid. The protein localises to the chloroplast thylakoid membrane. The enzyme catalyses reduced [plastocyanin] + hnu + oxidized [2Fe-2S]-[ferredoxin] = oxidized [plastocyanin] + reduced [2Fe-2S]-[ferredoxin]. Its function is as follows. Apoprotein for the two 4Fe-4S centers FA and FB of photosystem I (PSI); essential for photochemical activity. FB is the terminal electron acceptor of PSI, donating electrons to ferredoxin. The C-terminus interacts with PsaA/B/D and helps assemble the protein into the PSI complex. Required for binding of PsaD and PsaE to PSI. PSI is a plastocyanin/cytochrome c6-ferredoxin oxidoreductase, converting photonic excitation into a charge separation, which transfers an electron from the donor P700 chlorophyll pair to the spectroscopically characterized acceptors A0, A1, FX, FA and FB in turn. This chain is Photosystem I iron-sulfur center, found in Euglena gracilis.